A 178-amino-acid chain; its full sequence is Protein SPEAR1 (178 aa).

Disordered regions lie at residues 1-48 (MGST…QRGL) and 139-178 (HFLN…RLSL). Residues 14–28 (SSPPSSSPTSSSSSP) show a composition bias toward low complexity. Positions 46-54 (RGLGVAQLE) match the SPL motif. The segment covering 144 to 167 (DPSSTTRRSKSLGSGIQHSGSSEN) has biased composition (polar residues). The EAR signature appears at 170-176 (VDLELRL).

As to quaternary structure, interacts with SPL and SPEAR2. In terms of tissue distribution, not detected in leaves.

Its function is as follows. Adapter-like transcriptional repressor recruiting TPL/TPR corepressors to inhibit TCP transcription factors. The protein is Protein SPEAR1 of Arabidopsis thaliana (Mouse-ear cress).